A 401-amino-acid chain; its full sequence is Riboflavin biosynthesis protein RibBA (401 aa).

Residues 1-203 (MTDFQFSKVE…IQQLQEYRRK (203 aa)) form a DHBP synthase region. Residues 30 to 31 (RE), Asp35, 142 to 146 (RNGHT), and Glu166 contribute to the D-ribulose 5-phosphate site. Residue Glu31 coordinates Mg(2+). His145 contributes to the Mg(2+) binding site. Residues 204 to 401 (HDSLVKQISV…QIKMGHMFNF (198 aa)) are GTP cyclohydrolase II. 254–258 (RIHSE) contributes to the GTP binding site. Zn(2+) is bound by residues Cys259, Cys270, and Cys272. Residues Gln275, 297-299 (EGR), and Thr319 contribute to the GTP site. Residue Asp331 is the Proton acceptor; for GTP cyclohydrolase activity of the active site. Catalysis depends on Arg333, which acts as the Nucleophile; for GTP cyclohydrolase activity. Residues Thr354 and Lys359 each coordinate GTP.

It in the N-terminal section; belongs to the DHBP synthase family. This sequence in the C-terminal section; belongs to the GTP cyclohydrolase II family. Mg(2+) serves as cofactor. Requires Mn(2+) as cofactor. It depends on Zn(2+) as a cofactor.

It carries out the reaction D-ribulose 5-phosphate = (2S)-2-hydroxy-3-oxobutyl phosphate + formate + H(+). The catalysed reaction is GTP + 4 H2O = 2,5-diamino-6-hydroxy-4-(5-phosphoribosylamino)-pyrimidine + formate + 2 phosphate + 3 H(+). It participates in cofactor biosynthesis; riboflavin biosynthesis; 2-hydroxy-3-oxobutyl phosphate from D-ribulose 5-phosphate: step 1/1. Its pathway is cofactor biosynthesis; riboflavin biosynthesis; 5-amino-6-(D-ribitylamino)uracil from GTP: step 1/4. Its function is as follows. Catalyzes the conversion of D-ribulose 5-phosphate to formate and 3,4-dihydroxy-2-butanone 4-phosphate. Functionally, catalyzes the conversion of GTP to 2,5-diamino-6-ribosylamino-4(3H)-pyrimidinone 5'-phosphate (DARP), formate and pyrophosphate. In Actinobacillus pleuropneumoniae serotype 7 (strain AP76), this protein is Riboflavin biosynthesis protein RibBA.